The primary structure comprises 194 residues: Auxin-induced protein 22A (194 aa).

The EAR-like (transcriptional repression) signature appears at 13–17; sequence LRLGL. A disordered region spans residues 40–62; the sequence is EIDDVGDENSSSGGGGDRKMENK. The 89-residue stretch at 85–173 folds into the PB1 domain; sequence KMYVKVSMDG…KRLRIMKRAD (89 aa).

Belongs to the Aux/IAA family. As to quaternary structure, homodimers and heterodimers.

Its subcellular location is the nucleus. Aux/IAA proteins are short-lived transcriptional factors that function as repressors of early auxin response genes at low auxin concentrations. Repression is thought to result from the interaction with auxin response factors (ARFs), proteins that bind to the auxin-responsive promoter element (AuxRE). Formation of heterodimers with ARF proteins may alter their ability to modulate early auxin response genes expression. The sequence is that of Auxin-induced protein 22A (AUX22A) from Vigna radiata var. radiata (Mung bean).